The primary structure comprises 189 residues: Inner membrane-spanning protein YciB (189 aa).

The next 5 membrane-spanning stretches (helical) occupy residues Leu3 to Tyr23, Ile47 to Leu67, Trp76 to Phe96, Trp121 to Phe141, and Phe149 to Leu169.

Belongs to the YciB family.

The protein localises to the cell inner membrane. In terms of biological role, plays a role in cell envelope biogenesis, maintenance of cell envelope integrity and membrane homeostasis. This Paracidovorax citrulli (strain AAC00-1) (Acidovorax citrulli) protein is Inner membrane-spanning protein YciB.